The sequence spans 246 residues: Myelin-oligodendrocyte glycoprotein (246 aa).

Positions 1-28 are cleaved as a signal peptide; it reads MACLWSFSWPSCFLSLLLLLLQLSCSYA. The Extracellular segment spans residues 29-156; sequence GQFRVIGPGY…FYWVNPGVLT (128 aa). The region spanning 31–144 is the Ig-like V-type domain; the sequence is FRVIGPGYPI…EEAAMELKVE (114 aa). A disulfide bond links cysteine 52 and cysteine 126. Asparagine 59 carries an N-linked (GlcNAc...) asparagine glycan. The helical transmembrane segment at 157-177 threads the bilayer; the sequence is LIALVPTILLQVPVGLVFLFL. The Cytoplasmic portion of the chain corresponds to 178–209; that stretch reads QHRLRGKLRAEVENLHRTFDPHFLRVPCWKIT. A helical transmembrane segment spans residues 210 to 230; it reads LFVIVPVLGPLVALIICYNWL. Residues 231–246 lie on the Extracellular side of the membrane; it reads HRRLAGQFLEELRNPF.

It belongs to the immunoglobulin superfamily. BTN/MOG family. Homodimer. Found exclusively in the CNS, where it is localized on the surface of myelin and oligodendrocyte cytoplasmic membranes. Reduced expression levels are observed in jimpy and quacking dysmyelinating mutant mice.

Its subcellular location is the membrane. Its function is as follows. Minor component of the myelin sheath. May be involved in completion and/or maintenance of the myelin sheath and in cell-cell communication. Mediates homophilic cell-cell adhesion. This Mus musculus (Mouse) protein is Myelin-oligodendrocyte glycoprotein (Mog).